A 370-amino-acid chain; its full sequence is NADH-quinone oxidoreductase subunit D 2 (370 aa).

Belongs to the complex I 49 kDa subunit family. NDH-1 is composed of 14 different subunits. Subunits NuoB, C, D, E, F, and G constitute the peripheral sector of the complex.

It is found in the cell inner membrane. The enzyme catalyses a quinone + NADH + 5 H(+)(in) = a quinol + NAD(+) + 4 H(+)(out). Functionally, NDH-1 shuttles electrons from NADH, via FMN and iron-sulfur (Fe-S) centers, to quinones in the respiratory chain. The immediate electron acceptor for the enzyme in this species is believed to be ubiquinone. Couples the redox reaction to proton translocation (for every two electrons transferred, four hydrogen ions are translocated across the cytoplasmic membrane), and thus conserves the redox energy in a proton gradient. The protein is NADH-quinone oxidoreductase subunit D 2 of Solibacter usitatus (strain Ellin6076).